The following is a 91-amino-acid chain: Small ribosomal subunit protein bS20 (91 aa).

This sequence belongs to the bacterial ribosomal protein bS20 family.

Its function is as follows. Binds directly to 16S ribosomal RNA. This chain is Small ribosomal subunit protein bS20, found in Thermosipho melanesiensis (strain DSM 12029 / CIP 104789 / BI429).